Consider the following 548-residue polypeptide: MALHVPKAPGFAQMLKEGAKHYSGLEEAVYRNIQACKELAQTTRTAYGPNGMNKMVINHLEKLFVTNDAATILRELEVQHPAAKMLVMASHMQEQEVGDGTNFVLVFAGVLLELAEDLLRMGLSVSEVIEGYEKACKKALEILPDLVCCSAKNLRDVDEVASLLHTSVMSKQYGNESFLSKLIAQACVSILPDSGHFNVDNIRVCKIVGAGVSASSVLHGMVFNKETEGDVTSVKDAKXAVYSCPFDGMITETKGTVLIKNAEELMNFSKGEENLMDLQVKAIADSGANVVVTGGKVADMALHYANKYNLMIVRLNSKWDLRRLCKTVGATALPRLTPPTLEEMGHCNSVYLSEVGDTQVVVFKHEKEDGAISTILIRGSTDNLMDDIERAVDDGVNTFKVLTRDKRLVPGGGATEIELAKQITSYGETCPGLDQYAIKKFAEAFEAIPRALAENSGVKANEVISKLYAVHQEGNKNVGFDIEAEAAAVKDMLEAGILDTYLGKYWGIKLATNAAVTVLRVDQIIMAKPAGGPKPPSGKKDWDEDQND.

Position 2 is an N-acetylalanine (Ala-2). ADP is bound by residues Tyr-47 and Gly-48. Asp-99 serves as a coordination point for Mg(2+). Residues Gly-100, Thr-101, Asn-102, Phe-103, Met-169, Ser-170, Lys-171, Gly-412, and Asp-499 each coordinate ADP. Residues Gly-100, Thr-101, and Asn-102 each coordinate ATP. 5 residues coordinate ATP: Ser-170, Lys-171, Gly-412, Asp-499, and Lys-504. Tyr-505 is modified (phosphotyrosine). Residues 529-548 are disordered; the sequence is PAGGPKPPSGKKDWDEDQND.

As to quaternary structure, component of the chaperonin-containing T-complex (TRiC), a hexadecamer composed of two identical back-to-back stacked rings enclosing a protein folding chamber. Each ring is made up of eight different subunits: TCP1/CCT1, CCT2, CCT3, CCT4, CCT5, CCT6A/CCT6, CCT7, CCT8.

It is found in the cytoplasm. The protein resides in the cytoskeleton. It localises to the microtubule organizing center. Its subcellular location is the centrosome. The protein localises to the cilium basal body. It catalyses the reaction ATP + H2O = ADP + phosphate + H(+). Functionally, component of the chaperonin-containing T-complex (TRiC), a molecular chaperone complex that assists the folding of actin, tubulin and other proteins upon ATP hydrolysis. In Gallus gallus (Chicken), this protein is T-complex protein 1 subunit theta.